The following is a 154-amino-acid chain: Myoglobin (154 aa).

A Globin domain is found at 2–148 (GLSDGEWQLV…FRNDMAAKYK (147 aa)). S4 carries the phosphoserine modification. H65 serves as a coordination point for nitrite. H65 is an O2 binding site. Residue T68 is modified to Phosphothreonine. Residue H94 participates in heme b binding.

The protein belongs to the globin family. Monomeric.

The protein localises to the cytoplasm. It is found in the sarcoplasm. The catalysed reaction is Fe(III)-heme b-[protein] + nitric oxide + H2O = Fe(II)-heme b-[protein] + nitrite + 2 H(+). It catalyses the reaction H2O2 + AH2 = A + 2 H2O. Monomeric heme protein which primary function is to store oxygen and facilitate its diffusion within muscle tissues. Reversibly binds oxygen through a pentacoordinated heme iron and enables its timely and efficient release as needed during periods of heightened demand. Depending on the oxidative conditions of tissues and cells, and in addition to its ability to bind oxygen, it also has a nitrite reductase activity whereby it regulates the production of bioactive nitric oxide. Under stress conditions, like hypoxia and anoxia, it also protects cells against reactive oxygen species thanks to its pseudoperoxidase activity. This is Myoglobin (MB) from Sus scrofa (Pig).